The chain runs to 92 residues: Small ribosomal subunit protein uS19c (92 aa).

The protein belongs to the universal ribosomal protein uS19 family.

Its subcellular location is the plastid. The protein resides in the chloroplast. Its function is as follows. Protein S19 forms a complex with S13 that binds strongly to the 16S ribosomal RNA. This chain is Small ribosomal subunit protein uS19c (rps19), found in Guillardia theta (Cryptophyte).